The primary structure comprises 1405 residues: Protein translocase subunit SecA (1405 aa).

Residues 1-1099 (MHMKIKKFKK…SDYKKLNEDE (1099 aa)) are protein translocase subunit SecA. Residues glutamine 88, 106–110 (GEGKS), and aspartate 494 contribute to the ATP site. Residues 1100 to 1405 (SDDDIKAFYK…LDYLKENNKK (306 aa)) are unknown.

Belongs to the SecA family. Monomer and homodimer. Part of the essential Sec protein translocation apparatus which comprises SecA, SecYEG and auxiliary proteins SecDF. Other proteins may also be involved.

Its subcellular location is the cell membrane. The protein resides in the cytoplasm. It catalyses the reaction ATP + H2O + cellular proteinSide 1 = ADP + phosphate + cellular proteinSide 2.. Its function is as follows. Part of the Sec protein translocase complex. Interacts with the SecYEG preprotein conducting channel. Has a central role in coupling the hydrolysis of ATP to the transfer of proteins into and across the cell membrane, serving as an ATP-driven molecular motor driving the stepwise translocation of polypeptide chains across the membrane. This Malacoplasma penetrans (strain HF-2) (Mycoplasma penetrans) protein is Protein translocase subunit SecA.